Consider the following 496-residue polypeptide: Glycerol kinase (496 aa).

T14 is an ADP binding site. ATP is bound by residues T14 and T15. T14 is a sn-glycerol 3-phosphate binding site. 4 residues coordinate sn-glycerol 3-phosphate: R84, E85, Y136, and D246. Positions 84, 85, 136, 246, and 247 each coordinate glycerol. ADP is bound by residues T268 and G313. Residues T268, G313, Q317, and G414 each contribute to the ATP site. ADP-binding residues include G414 and N418.

This sequence belongs to the FGGY kinase family.

The catalysed reaction is glycerol + ATP = sn-glycerol 3-phosphate + ADP + H(+). Its pathway is polyol metabolism; glycerol degradation via glycerol kinase pathway; sn-glycerol 3-phosphate from glycerol: step 1/1. With respect to regulation, inhibited by fructose 1,6-bisphosphate (FBP). Functionally, key enzyme in the regulation of glycerol uptake and metabolism. Catalyzes the phosphorylation of glycerol to yield sn-glycerol 3-phosphate. This chain is Glycerol kinase, found in Myxococcus xanthus (strain DK1622).